A 135-amino-acid polypeptide reads, in one-letter code: Type 3 secretion system stator protein (135 aa).

This sequence belongs to the SctL stator family. As to quaternary structure, the core secretion machinery of the T3SS is composed of approximately 20 different proteins, including cytoplasmic components, a base, an export apparatus and a needle. This subunit is part of the cytosolic complex.

It is found in the cytoplasm. Its function is as follows. Component of the type III secretion system (T3SS), also called injectisome, which is used to inject bacterial effector proteins into eukaryotic host cells. Acts as a regulator of the HrcN/SctN ATPase activity. This Rhizobium fredii (Sinorhizobium fredii) protein is Type 3 secretion system stator protein.